A 1109-amino-acid polypeptide reads, in one-letter code: MKVAVNTFLLFLCSTSSIYAAFALNSDGAALLSLTRHWTSIPSDITQSWNASDSTPCSWLGVECDRRQFVDTLNLSSYGISGEFGPEISHLKHLKKVVLSGNGFFGSIPSQLGNCSLLEHIDLSSNSFTGNIPDTLGALQNLRNLSLFFNSLIGPFPESLLSIPHLETVYFTGNGLNGSIPSNIGNMSELTTLWLDDNQFSGPVPSSLGNITTLQELYLNDNNLVGTLPVTLNNLENLVYLDVRNNSLVGAIPLDFVSCKQIDTISLSNNQFTGGLPPGLGNCTSLREFGAFSCALSGPIPSCFGQLTKLDTLYLAGNHFSGRIPPELGKCKSMIDLQLQQNQLEGEIPGELGMLSQLQYLHLYTNNLSGEVPLSIWKIQSLQSLQLYQNNLSGELPVDMTELKQLVSLALYENHFTGVIPQDLGANSSLEVLDLTRNMFTGHIPPNLCSQKKLKRLLLGYNYLEGSVPSDLGGCSTLERLILEENNLRGGLPDFVEKQNLLFFDLSGNNFTGPIPPSLGNLKNVTAIYLSSNQLSGSIPPELGSLVKLEHLNLSHNILKGILPSELSNCHKLSELDASHNLLNGSIPSTLGSLTELTKLSLGENSFSGGIPTSLFQSNKLLNLQLGGNLLAGDIPPVGALQALRSLNLSSNKLNGQLPIDLGKLKMLEELDVSHNNLSGTLRVLSTIQSLTFINISHNLFSGPVPPSLTKFLNSSPTSFSGNSDLCINCPADGLACPESSILRPCNMQSNTGKGGLSTLGIAMIVLGALLFIICLFLFSAFLFLHCKKSVQEIAISAQEGDGSLLNKVLEATENLNDKYVIGKGAHGTIYKATLSPDKVYAVKKLVFTGIKNGSVSMVREIETIGKVRHRNLIKLEEFWLRKEYGLILYTYMENGSLHDILHETNPPKPLDWSTRHNIAVGTAHGLAYLHFDCDPAIVHRDIKPMNILLDSDLEPHISDFGIAKLLDQSATSIPSNTVQGTIGYMAPENAFTTVKSRESDVYSYGVVLLELITRKKALDPSFNGETDIVGWVRSVWTQTGEIQKIVDPSLLDELIDSSVMEQVTEALSLALRCAEKEVDKRPTMRDVVKQLTRWSIRSYSSSVRNKSK.

Residues 1–20 (MKVAVNTFLLFLCSTSSIYA) form the signal peptide. Residues 21–764 (AFALNSDGAA…GGLSTLGIAM (744 aa)) lie on the Extracellular side of the membrane. Asparagine 50, asparagine 74, and asparagine 114 each carry an N-linked (GlcNAc...) asparagine glycan. 6 LRR repeats span residues 69-92 (FVDT…SHLK), 93-115 (HLKK…LGNC), 117-140 (LLEH…GALQ), 141-162 (NLRN…SLLS), 165-187 (HLET…IGNM), and 189-209 (ELTT…SSLG). Residues asparagine 144, asparagine 177, and asparagine 186 are each glycosylated (N-linked (GlcNAc...) asparagine). A glycan (N-linked (GlcNAc...) asparagine) is linked at asparagine 210. 20 LRR repeats span residues 213 to 236 (TLQE…NNLE), 237 to 258 (NLVY…DFVS), 261 to 284 (QIDT…GNCT), 309 to 331 (KLDT…LGKC), 333 to 355 (SMID…LGML), 357 to 378 (QLQY…SIWK), 381 to 404 (SLQS…TELK), 405 to 427 (QLVS…LGAN), 429 to 451 (SLEV…LCSQ), 453 to 476 (KLKR…GGCS), 477 to 499 (TLER…VEKQ), 500 to 523 (NLLF…GNLK), 524 to 546 (NVTA…LGSL), 548 to 569 (KLEH…ELSN), 572 to 595 (KLSE…GSLT), 596 to 618 (ELTK…LFQS), 620 to 642 (KLLN…GALQ), 643 to 666 (ALRS…GKLK), 667 to 689 (MLEE…STIQ), and 690 to 710 (SLTF…PSLT). N-linked (GlcNAc...) asparagine glycans are attached at residues asparagine 245 and asparagine 282. Residues asparagine 367, asparagine 391, and asparagine 427 are each glycosylated (N-linked (GlcNAc...) asparagine). Asparagine 510, asparagine 524, asparagine 553, and asparagine 584 each carry an N-linked (GlcNAc...) asparagine glycan. 3 N-linked (GlcNAc...) asparagine glycosylation sites follow: asparagine 648, asparagine 677, and asparagine 695. Residues 765-785 (IVLGALLFIICLFLFSAFLFL) traverse the membrane as a helical segment. Residues 786-1109 (HCKKSVQEIA…YSSSVRNKSK (324 aa)) lie on the Cytoplasmic side of the membrane. Residues 816–1096 (LNDKYVIGKG…DVVKQLTRWS (281 aa)) enclose the Protein kinase domain. ATP contacts are provided by residues 822 to 830 (IGKGAHGTI) and lysine 845. The LRR 27 repeat unit spans residues 827 to 850 (HGTIYKATLSPDKVYAVKKLVFTG). Aspartate 942 functions as the Proton acceptor in the catalytic mechanism. Residues 958–981 (ISDFGIAKLLDQSATSIPSNTVQG) form an LRR 28 repeat.

Belongs to the protein kinase superfamily. Ser/Thr protein kinase family. As to expression, INRPK1 and INRPK1b are expressed in leaves, cotyledons, shoot tips and roots from induced and vegetative plants. The highest concentrations of INRPK1 are found in vegetative roots, and the lowest concentrations in vegetative cotyledons. INRPK1b is more abundant in roots than other tissues. INRPK1a is expressed in vegetative roots. INRPK1c is expressed in cotyledons.

The protein localises to the cell membrane. The protein resides in the secreted. The enzyme catalyses L-seryl-[protein] + ATP = O-phospho-L-seryl-[protein] + ADP + H(+). It catalyses the reaction L-threonyl-[protein] + ATP = O-phospho-L-threonyl-[protein] + ADP + H(+). In terms of biological role, possible role in short-day photoperiod floral induction. The sequence is that of Receptor-like protein kinase (INRPK1) from Ipomoea nil (Japanese morning glory).